Reading from the N-terminus, the 130-residue chain is Large ribosomal subunit protein bL12 (130 aa).

The protein belongs to the bacterial ribosomal protein bL12 family. Homodimer. Part of the ribosomal stalk of the 50S ribosomal subunit. Forms a multimeric L10(L12)X complex, where L10 forms an elongated spine to which 2 to 4 L12 dimers bind in a sequential fashion. Binds GTP-bound translation factors.

In terms of biological role, forms part of the ribosomal stalk which helps the ribosome interact with GTP-bound translation factors. Is thus essential for accurate translation. The protein is Large ribosomal subunit protein bL12 of Mycolicibacterium paratuberculosis (strain ATCC BAA-968 / K-10) (Mycobacterium paratuberculosis).